Reading from the N-terminus, the 294-residue chain is Foldase protein PrsA 1 (294 aa).

Positions 1 to 21 (MTKLKKVMISLVAATLLLLAG) are cleaved as a signal peptide. Cys22 carries N-palmitoyl cysteine lipidation. Residue Cys22 is the site of S-diacylglycerol cysteine attachment. In terms of domain architecture, PpiC spans 135 to 226 (EPNITVRHIL…YGYHLIQLVK (92 aa)).

The protein belongs to the PrsA family.

It localises to the cell membrane. The enzyme catalyses [protein]-peptidylproline (omega=180) = [protein]-peptidylproline (omega=0). In terms of biological role, plays a major role in protein secretion by helping the post-translocational extracellular folding of several secreted proteins. The chain is Foldase protein PrsA 1 (prsA1) from Listeria innocua serovar 6a (strain ATCC BAA-680 / CLIP 11262).